Here is a 325-residue protein sequence, read N- to C-terminus: Tetraacyldisaccharide 4'-kinase (325 aa).

An ATP-binding site is contributed by 55–62 (TAGGNGKT).

The protein belongs to the LpxK family.

It catalyses the reaction a lipid A disaccharide + ATP = a lipid IVA + ADP + H(+). It functions in the pathway glycolipid biosynthesis; lipid IV(A) biosynthesis; lipid IV(A) from (3R)-3-hydroxytetradecanoyl-[acyl-carrier-protein] and UDP-N-acetyl-alpha-D-glucosamine: step 6/6. In terms of biological role, transfers the gamma-phosphate of ATP to the 4'-position of a tetraacyldisaccharide 1-phosphate intermediate (termed DS-1-P) to form tetraacyldisaccharide 1,4'-bis-phosphate (lipid IVA). This Salmonella newport (strain SL254) protein is Tetraacyldisaccharide 4'-kinase.